A 70-amino-acid polypeptide reads, in one-letter code: MAGRLVILVLRAYQRFVSPLFPPSCRFTPSCSQYAVEAVERYGPLKGGAMAAWRVLRCHPFSRGGVDPVR.

It belongs to the UPF0161 family.

The protein localises to the cell membrane. Functionally, could be involved in insertion of integral membrane proteins into the membrane. The protein is Putative membrane protein insertion efficiency factor of Rubrobacter xylanophilus (strain DSM 9941 / JCM 11954 / NBRC 16129 / PRD-1).